The primary structure comprises 409 residues: MGNILRKGQQIYLAGDMKKQMLLNKDGTPKRKVGRPGRKRIDSEAKSRRTAQNRAAQRAFRDRKEAKMKSLQERVELLEQKDAQNKTTTDFLLCSLKSLLSEITKYRAKNSDDERILAFLDDLQEQQKRENEKGTSTAVSKAAKELPSPNSDENMTVNTSIEVQPHTQENEKVMWNIGSWNAPSLTNSWDSPPGNRTGAVTIGDESINGSEMPDFSLDLVSNDRQTGLEALDYDIHNYFPQHSERLTAEKIDTSACQCEIDQKYLPYETEDDTLFPSVLPLAVGSQCNNICNRKCIGTKPCSNKEIKCDLITSHLLNQKSLASVLPVAASHTKTIRTQSEAIEHISSAISNGKASCYHILEEISSLPKYSSLDIDDLCSELIIKAKCTDDCKIVVKARDLQSALVRQLL.

2 consecutive short sequence motifs (bipartite nuclear localization signal) follow at residues 17-24 (MKKQMLLN) and 47-54 (SRRTAQNR). Residues 26–64 (DGTPKRKVGRPGRKRIDSEAKSRRTAQNRAAQRAFRDRK) are disordered. Positions 43–106 (SEAKSRRTAQ…KSLLSEITKY (64 aa)) constitute a bZIP domain. Positions 46–69 (KSRRTAQNRAAQRAFRDRKEAKMK) are basic motif. The interval 71–99 (LQERVELLEQKDAQNKTTTDFLLCSLKSL) is leucine-zipper. A disordered region spans residues 127–156 (QKRENEKGTSTAVSKAAKELPSPNSDENMT). Residues 356-387 (CYHILEEISSLPKYSSLDIDDLCSELIIKAKC) form a c-CRD region. The Nuclear export signal signature appears at 372 to 379 (LDIDDLCS).

This sequence belongs to the bZIP family. YAP subfamily. As to quaternary structure, homodimer; disulfide-linked, upon oxidation. Interacts in the nucleus with the nuclear export protein CRM1. Interacts with RCK1. Depending on the oxidative stress inducing agent, CAD1/YAP2 can undergo two distinct conformational changes, both through oxidation of cysteine residues, and both masking the nuclear export signal, thus abolishing nuclear export by CRM1/exportin 1. Peroxide stress induces the formation of possible intramolecular disulfide bonds as well as intermolcular disulfide within a homodimer. Cadmium may bind directly to specific cysteine residues (Cys-391 and either Cys-356 or Cys-387) in the c-CRD.

The protein resides in the cytoplasm. Its subcellular location is the nucleus. Transcription activator involved in oxidative stress response and cadmium resistance. Regulates the transcription of genes overrepresented for the function of stabilizing proteins including the inducible Hsp90-family protein HSP82. Preferentially binds to promoters with the core binding site 5'-TTA[CG]TAA-3'. Activity of the transcription factor is controlled through oxidation of specific cysteine residues resulting in the alteration of its subcellular location. Activation by alkyl hydroperoxides or cadmium induces nuclear accumulation and as a result CAD1/YAP2 transcriptional activity. This Saccharomyces cerevisiae (strain ATCC 204508 / S288c) (Baker's yeast) protein is AP-1-like transcription factor YAP2.